The sequence spans 149 residues: Protein TraJ (149 aa).

The protein resides in the cell membrane. Functionally, this protein is essential for positively regulating the expression of transfer genes that are involved in the conjugal transfer of DNA between bacterial cells. The sequence is that of Protein TraJ (traJ) from Escherichia coli.